The primary structure comprises 678 residues: DNA ligase (678 aa).

NAD(+) is bound by residues 47–51, 96–97, and glutamate 122; these read DSDYD and SL. The active-site N6-AMP-lysine intermediate is the lysine 124. NAD(+)-binding residues include arginine 145, glutamate 182, lysine 300, and lysine 324. Cysteine 418, cysteine 421, cysteine 436, and cysteine 442 together coordinate Zn(2+). A BRCT domain is found at 602-678; sequence AYNESFTGKT…ILEDNLKDLL (77 aa).

This sequence belongs to the NAD-dependent DNA ligase family. LigA subfamily. Mg(2+) is required as a cofactor. Mn(2+) serves as cofactor.

The catalysed reaction is NAD(+) + (deoxyribonucleotide)n-3'-hydroxyl + 5'-phospho-(deoxyribonucleotide)m = (deoxyribonucleotide)n+m + AMP + beta-nicotinamide D-nucleotide.. DNA ligase that catalyzes the formation of phosphodiester linkages between 5'-phosphoryl and 3'-hydroxyl groups in double-stranded DNA using NAD as a coenzyme and as the energy source for the reaction. It is essential for DNA replication and repair of damaged DNA. The polypeptide is DNA ligase (Francisella tularensis subsp. holarctica (strain LVS)).